Reading from the N-terminus, the 63-residue chain is Frenatin 1.1 (63 aa).

The first 22 residues, 1-22 (MAFLKKSLFLVLFLGLVSLSIC), serve as a signal peptide directing secretion. Positions 23 to 49 (EKEKKEQEDEDENEEEKESEEGSEEKR) are excised as a propeptide. The tract at residues 25–63 (EKKEQEDEDENEEEKESEEGSEEKRGLLDTLGGILGLGR) is disordered. Over residues 30-45 (EDEDENEEEKESEEGS) the composition is skewed to acidic residues. Leucine amide is present on leucine 61.

Expressed by the skin glands.

Its subcellular location is the secreted. Functionally, antimicrobial peptide with selective activity. Is only active against Micrococcus luteus (MIC=25 ug/ml) and not against Bacillus cereus, Escherichia coli, Leuconostoc mesenteroides, Micrococcus luteus, Pastewella haemolytica, Staphylococcus aureus, Streptococcus faecalis and Streptococcus uberis. The protein is Frenatin 1.1 of Nyctimystes infrafrenatus (White-lipped tree frog).